The primary structure comprises 38 residues: Potassium channel toxin alpha-KTx 3.2 (38 aa).

3 disulfide bridges follow: C8–C28, C14–C33, and C18–C35.

This sequence belongs to the short scorpion toxin superfamily. Potassium channel inhibitor family. Alpha-KTx 03 subfamily. In terms of tissue distribution, expressed by the venom gland.

It localises to the secreted. Functionally, potent inhibitor of the Shaker potassium channels and its mammalian homologs (Kv1.1/KCNA1, Kv1.3/KCNA3, Kv1.6/KCNA6) (Ki&lt;1 nM for all channels). Also blocks Kv1.2/KCNA2 (IC(50)=26.8 nM). It also shows a weak interaction with nicotinic acetylcholine receptors (nAChR), suggesting it may weakly inhibit it. The protein is Potassium channel toxin alpha-KTx 3.2 of Leiurus hebraeus (Hebrew deathstalker scorpion).